Consider the following 273-residue polypeptide: 4-hydroxy-tetrahydrodipicolinate reductase (273 aa).

Residues 12-17 (GAGGRM) and E38 contribute to the NAD(+) site. R39 is an NADP(+) binding site. NAD(+) is bound by residues 102-104 (GTT) and 126-129 (AANF). The active-site Proton donor/acceptor is the H159. Residue H160 coordinates (S)-2,3,4,5-tetrahydrodipicolinate. The active-site Proton donor is the K163. 169 to 170 (GT) provides a ligand contact to (S)-2,3,4,5-tetrahydrodipicolinate.

This sequence belongs to the DapB family. Homotetramer.

The protein localises to the cytoplasm. It catalyses the reaction (S)-2,3,4,5-tetrahydrodipicolinate + NAD(+) + H2O = (2S,4S)-4-hydroxy-2,3,4,5-tetrahydrodipicolinate + NADH + H(+). The catalysed reaction is (S)-2,3,4,5-tetrahydrodipicolinate + NADP(+) + H2O = (2S,4S)-4-hydroxy-2,3,4,5-tetrahydrodipicolinate + NADPH + H(+). The protein operates within amino-acid biosynthesis; L-lysine biosynthesis via DAP pathway; (S)-tetrahydrodipicolinate from L-aspartate: step 4/4. Catalyzes the conversion of 4-hydroxy-tetrahydrodipicolinate (HTPA) to tetrahydrodipicolinate. This Salmonella arizonae (strain ATCC BAA-731 / CDC346-86 / RSK2980) protein is 4-hydroxy-tetrahydrodipicolinate reductase.